The sequence spans 292 residues: 4-hydroxy-tetrahydrodipicolinate synthase (292 aa).

Thr-45 lines the pyruvate pocket. Catalysis depends on Tyr-133, which acts as the Proton donor/acceptor. Lys-161 serves as the catalytic Schiff-base intermediate with substrate. Ile-203 is a binding site for pyruvate.

Belongs to the DapA family. As to quaternary structure, homotetramer; dimer of dimers.

It localises to the cytoplasm. The enzyme catalyses L-aspartate 4-semialdehyde + pyruvate = (2S,4S)-4-hydroxy-2,3,4,5-tetrahydrodipicolinate + H2O + H(+). The protein operates within amino-acid biosynthesis; L-lysine biosynthesis via DAP pathway; (S)-tetrahydrodipicolinate from L-aspartate: step 3/4. Its function is as follows. Catalyzes the condensation of (S)-aspartate-beta-semialdehyde [(S)-ASA] and pyruvate to 4-hydroxy-tetrahydrodipicolinate (HTPA). In Shigella boydii serotype 18 (strain CDC 3083-94 / BS512), this protein is 4-hydroxy-tetrahydrodipicolinate synthase.